A 138-amino-acid polypeptide reads, in one-letter code: Large ribosomal subunit protein bL19 (138 aa).

Belongs to the bacterial ribosomal protein bL19 family.

Its function is as follows. This protein is located at the 30S-50S ribosomal subunit interface and may play a role in the structure and function of the aminoacyl-tRNA binding site. In Rickettsia conorii (strain ATCC VR-613 / Malish 7), this protein is Large ribosomal subunit protein bL19.